The chain runs to 529 residues: Amino acid transporter heavy chain SLC3A2 (529 aa).

Residues 1–20 (MSQDTEVDMKEVELNELEPE) are disordered. The Cytoplasmic portion of the chain corresponds to 1–84 (MSQDTEVDMK…SPGWVRTRWA (84 aa)). Residue Ser-2 is modified to Phosphoserine. Phosphothreonine is present on Thr-5. The span at 7 to 20 (VDMKEVELNELEPE) shows a compositional bias: basic and acidic residues. A Glycyl lysine isopeptide (Lys-Gly) (interchain with G-Cter in ubiquitin) cross-link involves residue Lys-49. A Phosphoserine modification is found at Ser-65. Lys-66 is covalently cross-linked (Glycyl lysine isopeptide (Lys-Gly) (interchain with G-Cter in SUMO2)). Residues 85-105 (LLLLFWLGWIGMLAGAVVIIV) traverse the membrane as a helical; Signal-anchor for type II membrane protein segment. At 106–529 (RAPRCRELPV…GLLLHFPYVA (424 aa)) the chain is on the extracellular side. An N-linked (GlcNAc...) asparagine glycan is attached at Asn-266. A phosphoserine mark is found at Ser-307 and Ser-309. 2 N-linked (GlcNAc...) asparagine glycosylation sites follow: Asn-325 and Asn-405. Ser-426 is subject to Phosphoserine.

Belongs to the SLC3A transporter family. In terms of assembly, disulfide-linked heterodimer with a non-glycosylated light chain (SLC7A5, SLC7A6, SLC7A7, SLC7A8, SLC7A10 or SLC7A11). Interacts with TLCD3A/CT120 and ICAM1. Constitutively and specifically associates with beta-1 integrins (alpha-2/beta-1, alpha-3/beta-1, alpha-5/beta-1 and alpha-6/beta-1), but minimally with alpha-4/beta-1. Interacts with LAPTM4B; recruits SLC3A2 and SLC7A5 to lysosomes to promote leucine uptake into these organelles and is required for mTORC1 activation. In terms of processing, phosphorylation on Ser-307 or Ser-309 and on Ser-426 by ecto-protein kinases favors heterotypic cell-cell interactions. Post-translationally, N-glycosylated; N-glycosylation is crucial for trafficking and stability of SLC3A2 to the plasma membrane.

It localises to the apical cell membrane. Its subcellular location is the cell membrane. The protein resides in the cell junction. It is found in the lysosome membrane. The protein localises to the melanosome. It localises to the basolateral cell membrane. Acts as a chaperone that facilitates biogenesis and trafficking of functional transporters heterodimers to the plasma membrane. Forms heterodimer with SLC7 family transporters (SLC7A5, SLC7A6, SLC7A7, SLC7A8, SLC7A10 and SLC7A11), a group of amino-acid antiporters. Heterodimers function as amino acids exchangers, the specificity of the substrate depending on the SLC7A subunit. Heterodimers formed by SLC3A2/SLC7A6 or SLC3A2/SLC7A7 mediate the uptake of dibasic amino acids. Heterodimer SLC3A2/SLC7A11 functions as an antiporter by mediating the exchange of extracellular anionic L-cystine and intracellular L-glutamate across the cellular plasma membrane. SLC3A2/SLC7A10 translocates small neutral L- and D-amino acids across the plasma membrane. SLC3A2/SLC75 or SLC3A2/SLC7A8 translocates neutral amino acids with broad specificity, thyroid hormones and L-DOPA. SLC3A2 is essential for plasma membrane localization, stability, and the transport activity of SLC7A5 and SLC7A8. When associated with LAPTM4B, the heterodimer SLC7A5 is recruited to lysosomes to promote leucine uptake into these organelles, and thereby mediates mTORC1 activation. Modulates integrin-related signaling and is essential for integrin-dependent cell spreading, migration and tumor progression. This chain is Amino acid transporter heavy chain SLC3A2, found in Oryctolagus cuniculus (Rabbit).